The chain runs to 305 residues: Probable 5-dehydro-4-deoxyglucarate dehydratase (305 aa).

Belongs to the DapA family.

It catalyses the reaction 5-dehydro-4-deoxy-D-glucarate + H(+) = 2,5-dioxopentanoate + CO2 + H2O. The protein operates within carbohydrate acid metabolism; D-glucarate degradation; 2,5-dioxopentanoate from D-glucarate: step 2/2. In Xanthomonas campestris pv. campestris (strain 8004), this protein is Probable 5-dehydro-4-deoxyglucarate dehydratase.